The chain runs to 98 residues: MKIIAEIYRSPKEEGMYLYVKKEEGLGRVPEELLTLFGKPQQAMVLLLTPEKKLANADIGKVIESLNDKGYYLQLPPRDLVDAEAKRIRTLNSKLSGH.

One can recognise a YcgL domain in the interval isoleucine 3–arginine 87.

The protein is YcgL domain-containing protein CJA_2437 of Cellvibrio japonicus (strain Ueda107) (Pseudomonas fluorescens subsp. cellulosa).